Reading from the N-terminus, the 132-residue chain is Ribonuclease P protein component 4 (132 aa).

Zn(2+) is bound by residues cysteine 67, cysteine 70, cysteine 96, and cysteine 99.

Belongs to the eukaryotic/archaeal RNase P protein component 4 family. As to quaternary structure, consists of a catalytic RNA component and at least 4-5 protein subunits. Requires Zn(2+) as cofactor.

The protein localises to the cytoplasm. The enzyme catalyses Endonucleolytic cleavage of RNA, removing 5'-extranucleotides from tRNA precursor.. In terms of biological role, part of ribonuclease P, a protein complex that generates mature tRNA molecules by cleaving their 5'-ends. In Thermococcus kodakarensis (strain ATCC BAA-918 / JCM 12380 / KOD1) (Pyrococcus kodakaraensis (strain KOD1)), this protein is Ribonuclease P protein component 4.